A 224-amino-acid polypeptide reads, in one-letter code: Octanoyltransferase (224 aa).

One can recognise a BPL/LPL catalytic domain in the interval 45–223 (PSNKQAVWML…SLNKRFGLLW (179 aa)). Substrate contacts are provided by residues 87 to 94 (RGGDVTHH), 154 to 156 (SIG), and 167 to 169 (GIA). C185 serves as the catalytic Acyl-thioester intermediate.

The protein belongs to the LipB family.

The protein localises to the cytoplasm. It carries out the reaction octanoyl-[ACP] + L-lysyl-[protein] = N(6)-octanoyl-L-lysyl-[protein] + holo-[ACP] + H(+). Its pathway is protein modification; protein lipoylation via endogenous pathway; protein N(6)-(lipoyl)lysine from octanoyl-[acyl-carrier-protein]: step 1/2. Functionally, catalyzes the transfer of endogenously produced octanoic acid from octanoyl-acyl-carrier-protein onto the lipoyl domains of lipoate-dependent enzymes. Lipoyl-ACP can also act as a substrate although octanoyl-ACP is likely to be the physiological substrate. This chain is Octanoyltransferase, found in Prochlorococcus marinus (strain SARG / CCMP1375 / SS120).